The following is an 86-amino-acid chain: uncharacterized protein (86 aa).

A helical membrane pass occupies residues V63–F85.

The protein resides in the membrane. This is an uncharacterized protein from Dictyostelium discoideum (Social amoeba).